Reading from the N-terminus, the 327-residue chain is UPF0665 family protein C23C4.06c (327 aa).

The protein belongs to the UPF0665 family.

The protein resides in the cytoplasm. It is found in the nucleus. This chain is UPF0665 family protein C23C4.06c, found in Schizosaccharomyces pombe (strain 972 / ATCC 24843) (Fission yeast).